A 380-amino-acid chain; its full sequence is Cytochrome b (380 aa).

The next 4 membrane-spanning stretches (helical) occupy residues 33–53 (FGSL…FLAM), 77–98 (WLIR…YLHI), 113–133 (WNVG…GYVL), and 178–198 (FFAF…LHLL). Residues histidine 83 and histidine 97 each coordinate heme b. Residues histidine 182 and histidine 196 each contribute to the heme b site. Histidine 201 contributes to the a ubiquinone binding site. The next 4 membrane-spanning stretches (helical) occupy residues 226–246 (YKDL…ALFS), 288–308 (LGGV…PILH), 320–340 (FSQI…WIGG), and 347–367 (YIII…VFFP).

The protein belongs to the cytochrome b family. As to quaternary structure, the cytochrome bc1 complex contains 3 respiratory subunits (MT-CYB, CYC1 and UQCRFS1), 2 core proteins (UQCRC1 and UQCRC2) and probably 6 low-molecular weight proteins. Heme b is required as a cofactor.

The protein resides in the mitochondrion inner membrane. Component of the ubiquinol-cytochrome c reductase complex (complex III or cytochrome b-c1 complex) that is part of the mitochondrial respiratory chain. The b-c1 complex mediates electron transfer from ubiquinol to cytochrome c. Contributes to the generation of a proton gradient across the mitochondrial membrane that is then used for ATP synthesis. This chain is Cytochrome b (mt-cyb), found in Apogon semilineatus (Half-lined cardinal).